A 418-amino-acid polypeptide reads, in one-letter code: Glutamyl-tRNA reductase (418 aa).

Substrate-binding positions include Thr49–Arg52, Ser109, Glu114–Gln116, and Gln120. The Nucleophile role is filled by Cys50. Gly189–Ile194 contacts NADP(+).

The protein belongs to the glutamyl-tRNA reductase family. Homodimer.

It catalyses the reaction (S)-4-amino-5-oxopentanoate + tRNA(Glu) + NADP(+) = L-glutamyl-tRNA(Glu) + NADPH + H(+). It functions in the pathway porphyrin-containing compound metabolism; protoporphyrin-IX biosynthesis; 5-aminolevulinate from L-glutamyl-tRNA(Glu): step 1/2. Catalyzes the NADPH-dependent reduction of glutamyl-tRNA(Glu) to glutamate 1-semialdehyde (GSA). This is Glutamyl-tRNA reductase from Salmonella choleraesuis (strain SC-B67).